The chain runs to 546 residues: Glucose-6-phosphate isomerase (546 aa).

E353 functions as the Proton donor in the catalytic mechanism. Active-site residues include H384 and K512.

It belongs to the GPI family.

It is found in the cytoplasm. It catalyses the reaction alpha-D-glucose 6-phosphate = beta-D-fructose 6-phosphate. It participates in carbohydrate biosynthesis; gluconeogenesis. Its pathway is carbohydrate degradation; glycolysis; D-glyceraldehyde 3-phosphate and glycerone phosphate from D-glucose: step 2/4. Its function is as follows. Catalyzes the reversible isomerization of glucose-6-phosphate to fructose-6-phosphate. The chain is Glucose-6-phosphate isomerase from Methylococcus capsulatus (strain ATCC 33009 / NCIMB 11132 / Bath).